The primary structure comprises 474 residues: Hepatocyte nuclear factor 4-alpha (474 aa).

Residues 57–132 (SALCAICGDR…AGMKKEAVQN (76 aa)) constitute a DNA-binding region (nuclear receptor). 2 consecutive NR C4-type zinc fingers follow at residues 60–80 (CAIC…CDGC) and 96–120 (CRFS…LKKC). Phosphoserine occurs at positions 142 and 143. A Phosphotyrosine modification is found at Y144. Positions 147 to 377 (SSLPSINALL…NLLQEMLLGG (231 aa)) constitute an NR LBD domain. T166 is modified (phosphothreonine). S167 carries the phosphoserine modification. Residues K234 and K307 each participate in a glycyl lysine isopeptide (Lys-Gly) (interchain with G-Cter in ubiquitin) cross-link. A Phosphoserine; by AMPK modification is found at S313. A 9aaTAD motif is present at residues 368–376 (NLLQEMLLG). Residues 413-450 (SNGQMCEWPRPRGQAATPETPQPSPPSGSGSESYKLLP) form a disordered region. A phosphothreonine mark is found at T429 and T432. Position 436 is a phosphoserine (S436). At K458 the chain carries N6-acetyllysine.

Belongs to the nuclear hormone receptor family. NR2 subfamily. In terms of assembly, homodimerization is required for HNF4-alpha to bind to its recognition site. Interacts with CLOCK, BMAL1 and PER1. Interacts with PER2. Interacts with CRY1 and CRY2. Interacts with NR0B2/SHP; the resulting heterodimer is transcriptionally inactive. Interacts with DDX3X; this interaction disrupts the interaction between HNF4 and NR0B2 that forms inactive heterodimers and enhances the formation of active HNF4 homodimers. Phosphorylated on tyrosine residue(s); phosphorylation is important for its DNA-binding activity. Phosphorylation may directly or indirectly play a regulatory role in the subnuclear distribution. Phosphorylation at Ser-313 by AMPK reduces the ability to form homodimers and bind DNA. Post-translationally, acetylation at Lys-458 lowers transcriptional activation by about two-fold. Expressed in the liver, pancreas and colon in a circadian manner.

It is found in the nucleus. Its function is as follows. Transcriptional regulator which controls the expression of hepatic genes during the transition of endodermal cells to hepatic progenitor cells, facilitatating the recruitment of RNA pol II to the promoters of target genes. Activates the transcription of CYP2C38. Represses the CLOCK-BMAL1 transcriptional activity and is essential for circadian rhythm maintenance and period regulation in the liver and colon cells. The protein is Hepatocyte nuclear factor 4-alpha (Hnf4a) of Mus musculus (Mouse).